A 280-amino-acid polypeptide reads, in one-letter code: Ribosomal protein L11 methyltransferase (280 aa).

The S-adenosyl-L-methionine site is built by Thr131, Gly152, Asp174, and Asn217.

This sequence belongs to the methyltransferase superfamily. PrmA family.

The protein resides in the cytoplasm. The enzyme catalyses L-lysyl-[protein] + 3 S-adenosyl-L-methionine = N(6),N(6),N(6)-trimethyl-L-lysyl-[protein] + 3 S-adenosyl-L-homocysteine + 3 H(+). Functionally, methylates ribosomal protein L11. The chain is Ribosomal protein L11 methyltransferase from Bacteroides thetaiotaomicron (strain ATCC 29148 / DSM 2079 / JCM 5827 / CCUG 10774 / NCTC 10582 / VPI-5482 / E50).